Consider the following 486-residue polypeptide: Arginine/agmatine antiporter (486 aa).

12 consecutive transmembrane segments (helical) span residues 12–32 (LGAIALAGMVISSMIGGGIFS), 41–61 (AGAGAIILAWLLTGIGMFFIA), 85–105 (GFGPYVGFTIGWGYWLCQIFG), 129–149 (NTIPAIIGGSILIWVFNFIVL), 160–180 (IIGTVCKLVPLIVFIIITAFA), 211–231 (STMLVTLWAFIGIEGAVVMSA), 242–262 (ATLLGFVGCLTVYILLSILPF), 296–316 (VGLLIAILSSWLSWTIIVAEI), 341–361 (LSLYITSALMQITMLFVYFST), 367–387 (MLSITGVMVLPAYLASAAFLF), 418–438 (LWLIYAGGLNYLLMSVILLAL), and 461–481 (EVTKIIIIALLALLAIFLFST).

The protein belongs to the amino acid-polyamine-organocation (APC) superfamily. Basic amino acid/polyamine antiporter (APA) (TC 2.A.3.2) family.

The protein resides in the cell inner membrane. In terms of biological role, catalyzes the exchange of L-arginine for agmatine. The arginine uptake by the bacterium in the macrophage may be a virulence factor against the host innate immune response. This chain is Arginine/agmatine antiporter (aaxC), found in Chlamydia caviae (strain ATCC VR-813 / DSM 19441 / 03DC25 / GPIC) (Chlamydophila caviae).